A 239-amino-acid polypeptide reads, in one-letter code: Purine nucleoside phosphorylase DeoD-type (239 aa).

H5 contacts a purine D-ribonucleoside. Phosphate is bound by residues G21, R25, R44, and 88–91 (RVGS). A purine D-ribonucleoside-binding positions include 180 to 182 (EME) and 204 to 205 (SD). Catalysis depends on D205, which acts as the Proton donor.

It belongs to the PNP/UDP phosphorylase family. Homohexamer; trimer of homodimers.

It catalyses the reaction a purine D-ribonucleoside + phosphate = a purine nucleobase + alpha-D-ribose 1-phosphate. The catalysed reaction is a purine 2'-deoxy-D-ribonucleoside + phosphate = a purine nucleobase + 2-deoxy-alpha-D-ribose 1-phosphate. In terms of biological role, catalyzes the reversible phosphorolytic breakdown of the N-glycosidic bond in the beta-(deoxy)ribonucleoside molecules, with the formation of the corresponding free purine bases and pentose-1-phosphate. This is Purine nucleoside phosphorylase DeoD-type from Salmonella arizonae (strain ATCC BAA-731 / CDC346-86 / RSK2980).